Consider the following 175-residue polypeptide: NADH-ubiquinone oxidoreductase chain 6 (175 aa).

A run of 5 helical transmembrane segments spans residues 1–21 (MMTYIVFILSIIFVISFVGFS), 25–45 (SPIYGGLVLIISGAVGCGIVL), 47–67 (FGGSFLGLMVFLIYLGGMLVV), 88–108 (AVLGAFVMGLLSELLLACYIL), and 149–169 (YGTWLVIVTGWSLFIGVLVIM).

This sequence belongs to the complex I subunit 6 family. As to quaternary structure, core subunit of respiratory chain NADH dehydrogenase (Complex I) which is composed of 45 different subunits.

It localises to the mitochondrion inner membrane. It catalyses the reaction a ubiquinone + NADH + 5 H(+)(in) = a ubiquinol + NAD(+) + 4 H(+)(out). In terms of biological role, core subunit of the mitochondrial membrane respiratory chain NADH dehydrogenase (Complex I) which catalyzes electron transfer from NADH through the respiratory chain, using ubiquinone as an electron acceptor. Essential for the catalytic activity and assembly of complex I. In Halichoerus grypus (Gray seal), this protein is NADH-ubiquinone oxidoreductase chain 6 (MT-ND6).